The sequence spans 399 residues: Bombesin receptor subtype-3 (399 aa).

The Extracellular segment spans residues 1–41 (MAQRQPHSPNQTLISITNDTESSSSVVSNDNTNKGWSGDNS). 2 N-linked (GlcNAc...) asparagine glycosylation sites follow: N10 and N18. Residues 42–63 (PGIEALCAIYITYAVIISVGIL) form a helical membrane-spanning segment. Over 64–82 (GNAILIKVFFKTKSMQTVP) the chain is Cytoplasmic. Residues 83-103 (NIFITSLAFGDLLLLLTCVPV) form a helical membrane-spanning segment. Topologically, residues 104–121 (DATHYLAEGWLFGRIGCK) are extracellular. A disulfide bridge connects residues C120 and C203. Residues 122–143 (VLSFIRLTSVGVSVFTLTILSA) form a helical membrane-spanning segment. The Cytoplasmic segment spans residues 144–163 (DRYKAVVKPLERQPSNAILK). A helical transmembrane segment spans residues 164–184 (TCVKAGCVWIVSMIFALPEAI). Residues 185–220 (FSNVYTFRDPNKNMTFESCTSYPVSKKLLQEIHSLL) lie on the Extracellular side of the membrane. A helical membrane pass occupies residues 221 to 241 (CFLVFYIIPLSIISVYYSLIA). The Cytoplasmic portion of the chain corresponds to 242-272 (RTLYKSTLNIPTEEQSHARKQIESRKRIART). A helical membrane pass occupies residues 273–293 (VLVLVALFALCWLPNHLLYLY). Topologically, residues 294–313 (HSFTSQTYVDPSAMHFIFTI) are extracellular. A helical membrane pass occupies residues 314 to 333 (FSRVLAFSNSCVNPFALYWL). Residues 334–399 (SKSFQKHFKA…CSVKQAEDRF (66 aa)) lie on the Cytoplasmic side of the membrane. C347 carries S-palmitoyl cysteine lipidation.

The protein belongs to the G-protein coupled receptor 1 family. Interacts with C6orf89. In terms of tissue distribution, in germ cells in testis. Lung carcinoma cells.

It localises to the cell membrane. Its function is as follows. Role in sperm cell division, maturation, or function. This receptor mediates its action by association with G proteins that activate a phosphatidylinositol-calcium second messenger system. In Homo sapiens (Human), this protein is Bombesin receptor subtype-3 (BRS3).